The following is a 63-amino-acid chain: MKANELKDKSVEQLNADLLDLLKAQFGLRMQNATGQLGKPSELKRVRRDIARIKTVLTEKGAK.

Belongs to the universal ribosomal protein uL29 family.

This is Large ribosomal subunit protein uL29 from Neisseria meningitidis serogroup C (strain 053442).